Here is an 837-residue protein sequence, read N- to C-terminus: Anaphase-promoting complex subunit 4 (837 aa).

Composition is skewed to low complexity over residues N59–N81 and S547–N581. 2 disordered regions span residues N59–K89 and S547–N588.

It belongs to the APC4 family. As to quaternary structure, the APC/C is composed of at least 13 subunits that stay tightly associated throughout the cell cycle: anapc1, anapc2, anapc3, anapc4, anapc5, anapc6, anapc7, anapc8, anapc10, anapc11, cdc20, cdc26 and cdh1.

Its subcellular location is the nucleus. It functions in the pathway protein modification; protein ubiquitination. Functionally, component of the anaphase promoting complex/cyclosome (APC/C), a cell cycle-regulated E3 ubiquitin-protein ligase complex that controls progression through mitosis and the G1 phase of the cell cycle. In Dictyostelium discoideum (Social amoeba), this protein is Anaphase-promoting complex subunit 4 (anapc4).